Reading from the N-terminus, the 188-residue chain is Putative nucleotidase OB0422 (188 aa).

Belongs to the 5'(3')-deoxyribonucleotidase family.

The polypeptide is Putative nucleotidase OB0422 (Oceanobacillus iheyensis (strain DSM 14371 / CIP 107618 / JCM 11309 / KCTC 3954 / HTE831)).